The chain runs to 416 residues: Glutamyl-tRNA reductase (416 aa).

Residues 49–52 (TCNR), Ser-105, 110–112 (ETQ), and Gln-116 contribute to the substrate site. Cys-50 functions as the Nucleophile in the catalytic mechanism. 185-190 (GAGEMI) provides a ligand contact to NADP(+).

Belongs to the glutamyl-tRNA reductase family. Homodimer.

The catalysed reaction is (S)-4-amino-5-oxopentanoate + tRNA(Glu) + NADP(+) = L-glutamyl-tRNA(Glu) + NADPH + H(+). It participates in porphyrin-containing compound metabolism; protoporphyrin-IX biosynthesis; 5-aminolevulinate from L-glutamyl-tRNA(Glu): step 1/2. Catalyzes the NADPH-dependent reduction of glutamyl-tRNA(Glu) to glutamate 1-semialdehyde (GSA). This Thiobacillus denitrificans (strain ATCC 25259 / T1) protein is Glutamyl-tRNA reductase.